The chain runs to 631 residues: 1-deoxy-D-xylulose-5-phosphate synthase (631 aa).

Residues His87 and 128–130 contribute to the thiamine diphosphate site; that span reads GHS. Asp159 provides a ligand contact to Mg(2+). Thiamine diphosphate contacts are provided by residues 160–161, Asn188, Phe295, and Glu377; that span reads GA. Asn188 is a Mg(2+) binding site.

It belongs to the transketolase family. DXPS subfamily. As to quaternary structure, homodimer. Mg(2+) serves as cofactor. Thiamine diphosphate is required as a cofactor.

It carries out the reaction D-glyceraldehyde 3-phosphate + pyruvate + H(+) = 1-deoxy-D-xylulose 5-phosphate + CO2. The protein operates within metabolic intermediate biosynthesis; 1-deoxy-D-xylulose 5-phosphate biosynthesis; 1-deoxy-D-xylulose 5-phosphate from D-glyceraldehyde 3-phosphate and pyruvate: step 1/1. Its function is as follows. Catalyzes the acyloin condensation reaction between C atoms 2 and 3 of pyruvate and glyceraldehyde 3-phosphate to yield 1-deoxy-D-xylulose-5-phosphate (DXP). This Pseudomonas putida (strain GB-1) protein is 1-deoxy-D-xylulose-5-phosphate synthase.